The chain runs to 152 residues: Gene 57 protein (152 aa).

The region spanning 57–137 is the Toprim domain; it reads RDMAITEGEI…IPMPEGEDVN (81 aa).

The chain is Gene 57 protein (57) from Mycobacterium (Mycobacteriophage D29).